A 114-amino-acid polypeptide reads, in one-letter code: uncharacterized protein (114 aa).

The protein to M.jannaschii MJ0310 and MJ0714.

This is an uncharacterized protein from Methanocaldococcus jannaschii (strain ATCC 43067 / DSM 2661 / JAL-1 / JCM 10045 / NBRC 100440) (Methanococcus jannaschii).